We begin with the raw amino-acid sequence, 75 residues long: U6-lycotoxin-Ls1d (75 aa).

Positions Met-1 to Ala-21 are cleaved as a signal peptide. Residues Glu-22 to Arg-25 constitute a propeptide that is removed on maturation.

Belongs to the neurotoxin 19 (CSTX) family. 06 (U6-Lctx) subfamily. Contains 4 disulfide bonds. In terms of tissue distribution, expressed by the venom gland.

It localises to the secreted. In Lycosa singoriensis (Wolf spider), this protein is U6-lycotoxin-Ls1d.